A 134-amino-acid chain; its full sequence is MPISLKVLAPNKNVYQGEAEEVILPSTTGQLGVLPGHISLVTAIDIGVLRLRMNSQWQSIALMGGFAEIESDEVIVLVNNAEIGSDIDVQNAEQDLKEAKLVMTKFPENEKNSEKIKALQEISKAEARIQAAKN.

The protein belongs to the ATPase epsilon chain family. F-type ATPases have 2 components, CF(1) - the catalytic core - and CF(0) - the membrane proton channel. CF(1) has five subunits: alpha(3), beta(3), gamma(1), delta(1), epsilon(1). CF(0) has three main subunits: a, b and c.

The protein resides in the cellular thylakoid membrane. Functionally, produces ATP from ADP in the presence of a proton gradient across the membrane. The protein is ATP synthase epsilon chain of Prochlorococcus marinus (strain MIT 9312).